Consider the following 75-residue polypeptide: Small ribosomal subunit protein bS18 (75 aa).

Belongs to the bacterial ribosomal protein bS18 family. In terms of assembly, part of the 30S ribosomal subunit. Forms a tight heterodimer with protein bS6.

Its function is as follows. Binds as a heterodimer with protein bS6 to the central domain of the 16S rRNA, where it helps stabilize the platform of the 30S subunit. The sequence is that of Small ribosomal subunit protein bS18 from Thermotoga sp. (strain RQ2).